The primary structure comprises 317 residues: Nitrilase (317 aa).

The CN hydrolase domain occupies 5–280 (VKVAVVQAEP…DGVIISELDM (276 aa)). Catalysis depends on Glu-45, which acts as the Proton acceptor. Lys-125 is a catalytic residue. Cys-165 (nucleophile) is an active-site residue.

Belongs to the carbon-nitrogen hydrolase superfamily. Nitrilase family.

It carries out the reaction a nitrile + 2 H2O = a carboxylate + NH4(+). Functionally, nitrilase that hydrolyzes preferentially 4-cyanopyridine. Is also able to hydrolyze some aliphatic nitriles, such as phenylacetonitrile. The chain is Nitrilase from Meyerozyma guilliermondii (strain ATCC 6260 / CBS 566 / DSM 6381 / JCM 1539 / NBRC 10279 / NRRL Y-324) (Yeast).